The sequence spans 796 residues: Inactive dipeptidyl peptidase 10 (796 aa).

The Cytoplasmic segment spans residues 1-34 (MNQTASVSHHIKCQPSKTIKELGSNSPPQRNWKG). Residues 1–56 (MNQTASVSHHIKCQPSKTIKELGSNSPPQRNWKGIAIALLVILVVCSLITMSVILL) are mediates effects on KCND2. A helical; Signal-anchor for type II membrane protein transmembrane segment spans residues 35 to 55 (IAIALLVILVVCSLITMSVIL). At 56–796 (LTPDELTNSS…VLPQEPEEDE (741 aa)) the chain is on the extracellular side. N-linked (GlcNAc...) asparagine glycosylation is found at Asn90, Asn111, and Asn119. Residues Tyr138 and Tyr143 each carry the phosphotyrosine modification. N-linked (GlcNAc...) asparagine glycans are attached at residues Asn257, Asn342, and Asn748.

Belongs to the peptidase S9B family. DPPIV subfamily. In terms of assembly, may form oligomers. Interacts with KCND1. Interacts with KCND2. N-glycosylation is important for cell surface expression, specially at Asn-257, which is crucial. As to expression, found in serum, T-cells and brain (at protein level). Expressed in brain, pancreas, spinal cord and adrenal glands.

Its subcellular location is the cell membrane. Its function is as follows. Promotes cell surface expression of the potassium channel KCND2. Modulates the activity and gating characteristics of the potassium channel KCND2. Has no dipeptidyl aminopeptidase activity. This Homo sapiens (Human) protein is Inactive dipeptidyl peptidase 10 (DPP10).